The following is a 504-amino-acid chain: Galactan beta-1,4-galactosyltransferase GALS3 (504 aa).

A helical transmembrane segment spans residues 30–50 (LTFMALLVLCTLATLLPFIPS). A GT92 domain is found at 242–456 (DYLYCGSSLY…YHGSISQRRE (215 aa)).

Belongs to the glycosyltransferase 92 family. As to expression, expressed in root caps, mature leaves, top of the stems and seeds.

The protein localises to the golgi apparatus membrane. Involved in the biosynthesis of beta-1,4-galactan. Beta-1,4-galactans are abundant polysaccharides in plant cell walls and are found as side-chain of rhamnogalacturonan I, which is a major component of pectin. This Arabidopsis thaliana (Mouse-ear cress) protein is Galactan beta-1,4-galactosyltransferase GALS3.